Here is a 38-residue protein sequence, read N- to C-terminus: Photosystem II reaction center protein L (38 aa).

A helical membrane pass occupies residues 17–37; the sequence is SLYWGLLLIFVLAVLFSSYIF.

It belongs to the PsbL family. As to quaternary structure, PSII is composed of 1 copy each of membrane proteins PsbA, PsbB, PsbC, PsbD, PsbE, PsbF, PsbH, PsbI, PsbJ, PsbK, PsbL, PsbM, PsbT, PsbY, PsbZ, Psb30/Ycf12, at least 3 peripheral proteins of the oxygen-evolving complex and a large number of cofactors. It forms dimeric complexes.

Its subcellular location is the plastid. The protein resides in the chloroplast thylakoid membrane. In terms of biological role, one of the components of the core complex of photosystem II (PSII). PSII is a light-driven water:plastoquinone oxidoreductase that uses light energy to abstract electrons from H(2)O, generating O(2) and a proton gradient subsequently used for ATP formation. It consists of a core antenna complex that captures photons, and an electron transfer chain that converts photonic excitation into a charge separation. This subunit is found at the monomer-monomer interface and is required for correct PSII assembly and/or dimerization. This chain is Photosystem II reaction center protein L, found in Bigelowiella natans (Pedinomonas minutissima).